Reading from the N-terminus, the 649-residue chain is Serine/threonine-protein kinase par-4 (649 aa).

The span at Met1–Thr11 shows a compositional bias: polar residues. Positions Met1 to Gln132 are disordered. Positions Asn45–Pro55 are enriched in basic and acidic residues. 2 stretches are compositionally biased toward acidic residues: residues Pro64–Glu77 and Asp117–Pro129. The Protein kinase domain maps to Tyr197 to Phe460. Residues Ile203–Val211 and Lys226 contribute to the ATP site. Asp324 (proton acceptor) is an active-site residue. The tract at residues Thr548 to Ser649 is disordered. Low complexity predominate over residues Ala597–Ala609.

This sequence belongs to the protein kinase superfamily. CAMK Ser/Thr protein kinase family. LKB1 subfamily. The cofactor is Mg(2+). It depends on Mn(2+) as a cofactor.

It localises to the cytoplasm. The protein resides in the cell cortex. It carries out the reaction L-seryl-[protein] + ATP = O-phospho-L-seryl-[protein] + ADP + H(+). It catalyses the reaction L-threonyl-[protein] + ATP = O-phospho-L-threonyl-[protein] + ADP + H(+). Functionally, required for cytoplasmic partitioning and asymmetric cell division in early embryogenesis. Phosphorylates and restricts the asymmetry effectors mex-5 and mex-6 to the anterior cytoplasm of the zygote and maintains these phosphorylations until fertilization. Phosphorylates and regulates aak-2 in response to oxidative stress. May also play a role in motility, behavioral response, regulation of lifespan and dauer formation through this pathway. This Caenorhabditis briggsae protein is Serine/threonine-protein kinase par-4.